We begin with the raw amino-acid sequence, 309 residues long: Porphobilinogen deaminase (309 aa).

Residue cysteine 241 is modified to S-(dipyrrolylmethanemethyl)cysteine.

This sequence belongs to the HMBS family. In terms of assembly, monomer. Dipyrromethane serves as cofactor.

It carries out the reaction 4 porphobilinogen + H2O = hydroxymethylbilane + 4 NH4(+). The protein operates within porphyrin-containing compound metabolism; protoporphyrin-IX biosynthesis; coproporphyrinogen-III from 5-aminolevulinate: step 2/4. Functionally, tetrapolymerization of the monopyrrole PBG into the hydroxymethylbilane pre-uroporphyrinogen in several discrete steps. In Bacillus cereus (strain G9842), this protein is Porphobilinogen deaminase.